The chain runs to 846 residues: DNA mismatch repair protein MutS (846 aa).

ATP is bound at residue 610-617 (GPNMGGKS).

Belongs to the DNA mismatch repair MutS family.

Functionally, this protein is involved in the repair of mismatches in DNA. It is possible that it carries out the mismatch recognition step. This protein has a weak ATPase activity. This Legionella pneumophila (strain Corby) protein is DNA mismatch repair protein MutS.